A 511-amino-acid polypeptide reads, in one-letter code: Putative thymidine phosphorylase 1 (511 aa).

The protein belongs to the thymidine/pyrimidine-nucleoside phosphorylase family. Type 2 subfamily.

It catalyses the reaction thymidine + phosphate = 2-deoxy-alpha-D-ribose 1-phosphate + thymine. The sequence is that of Putative thymidine phosphorylase 1 from Acidovorax sp. (strain JS42).